The chain runs to 273 residues: Diaminopimelate epimerase (273 aa).

2 residues coordinate substrate: Asn-11 and Asn-60. Residue Cys-69 is the Proton donor of the active site. Substrate contacts are provided by residues 70 to 71, Asn-181, and 199 to 200; these read GN and ER. The active-site Proton acceptor is Cys-209. 210 to 211 provides a ligand contact to substrate; that stretch reads GT.

It belongs to the diaminopimelate epimerase family. Homodimer.

The protein localises to the cytoplasm. It carries out the reaction (2S,6S)-2,6-diaminopimelate = meso-2,6-diaminopimelate. It participates in amino-acid biosynthesis; L-lysine biosynthesis via DAP pathway; DL-2,6-diaminopimelate from LL-2,6-diaminopimelate: step 1/1. Catalyzes the stereoinversion of LL-2,6-diaminopimelate (L,L-DAP) to meso-diaminopimelate (meso-DAP), a precursor of L-lysine and an essential component of the bacterial peptidoglycan. The sequence is that of Diaminopimelate epimerase from Helicobacter pylori (strain Shi470).